We begin with the raw amino-acid sequence, 263 residues long: Acetylglutamate kinase (263 aa).

Substrate contacts are provided by residues 48 to 49 (GG), Arg-70, and Asn-162.

This sequence belongs to the acetylglutamate kinase family. ArgB subfamily.

Its subcellular location is the cytoplasm. The enzyme catalyses N-acetyl-L-glutamate + ATP = N-acetyl-L-glutamyl 5-phosphate + ADP. The protein operates within amino-acid biosynthesis; L-arginine biosynthesis; N(2)-acetyl-L-ornithine from L-glutamate: step 2/4. Functionally, catalyzes the ATP-dependent phosphorylation of N-acetyl-L-glutamate. The protein is Acetylglutamate kinase of Vibrio vulnificus (strain YJ016).